The primary structure comprises 116 residues: NADH-quinone oxidoreductase subunit A (116 aa).

Helical transmembrane passes span 3–23 (FTFL…VIAL), 61–81 (FAIL…WAVV), and 88–108 (QGLV…AYAW).

This sequence belongs to the complex I subunit 3 family. In terms of assembly, NDH-1 is composed of 14 different subunits. Subunits NuoA, H, J, K, L, M, N constitute the membrane sector of the complex.

Its subcellular location is the cell inner membrane. The catalysed reaction is a quinone + NADH + 5 H(+)(in) = a quinol + NAD(+) + 4 H(+)(out). NDH-1 shuttles electrons from NADH, via FMN and iron-sulfur (Fe-S) centers, to quinones in the respiratory chain. The immediate electron acceptor for the enzyme in this species is believed to be a menaquinone. Couples the redox reaction to proton translocation (for every two electrons transferred, four hydrogen ions are translocated across the cytoplasmic membrane), and thus conserves the redox energy in a proton gradient. The sequence is that of NADH-quinone oxidoreductase subunit A from Bacteroides thetaiotaomicron (strain ATCC 29148 / DSM 2079 / JCM 5827 / CCUG 10774 / NCTC 10582 / VPI-5482 / E50).